Consider the following 232-residue polypeptide: Dehydrin DHN3 (232 aa).

Over residues 1–14 the composition is skewed to polar residues; sequence MSQYQNQYGAQTGM. 2 disordered regions span residues 1 to 66 and 140 to 232; these read MSQY…QHRG and EHHG…CTGH. Positions 49-60 are enriched in gly residues; sequence TTGGATGQGHGH. Residues 140–157 show a composition bias toward basic and acidic residues; sequence EHHGDKKGVMDKIKEKIP. The span at 159–168 shows a compositional bias: polar residues; the sequence is TEQSRTNTDG. Basic and acidic residues predominate over residues 198 to 223; that stretch reads EQQDVHHGDEQHGEKKGIMEKIKEKL.

The protein belongs to the plant dehydrin family.

This Pisum sativum (Garden pea) protein is Dehydrin DHN3 (DHN3).